Here is a 212-residue protein sequence, read N- to C-terminus: Golgi-associated RAB2 interactor protein 5A (212 aa).

Disordered stretches follow at residues 1 to 21 and 162 to 212; these read MKGG…LAPA and PFTH…LWGL. Residues 169 to 185 show a composition bias toward acidic residues; the sequence is APEEEEEEEEEEEEEEV.

The protein belongs to the GARIN family. As to quaternary structure, interacts (via N-terminus) with RAB2B (in GTP-bound form). In terms of tissue distribution, expressed in testis (at protein level).

It localises to the golgi apparatus. RAB2B effector protein which promotes cytosolic DNA-induced innate immune responses. Regulates IFN responses against DNA viruses by regulating the CGAS-STING signaling axis. In Mus musculus (Mouse), this protein is Golgi-associated RAB2 interactor protein 5A.